Here is an 80-residue protein sequence, read N- to C-terminus: Exodeoxyribonuclease 7 small subunit (80 aa).

This sequence belongs to the XseB family. As to quaternary structure, heterooligomer composed of large and small subunits.

It localises to the cytoplasm. It catalyses the reaction Exonucleolytic cleavage in either 5'- to 3'- or 3'- to 5'-direction to yield nucleoside 5'-phosphates.. Bidirectionally degrades single-stranded DNA into large acid-insoluble oligonucleotides, which are then degraded further into small acid-soluble oligonucleotides. This is Exodeoxyribonuclease 7 small subunit from Pseudoalteromonas translucida (strain TAC 125).